The chain runs to 2273 residues: Linear gramicidin synthase subunit A (2273 aa).

Positions 1 to 144 (MRILFLTTFM…AIEELFIREW (144 aa)) are GART. 2 consecutive Carrier domains span residues 693–767 (APTD…TEQK) and 1724–1798 (APRT…TSEQ). O-(pantetheine 4'-phosphoryl)serine occurs at positions 728 and 1759.

Belongs to the ATP-dependent AMP-binding enzyme family. In terms of assembly, large multienzyme complex composed of 4 subunits; LgrA, LgrB, LgrC and LgrD. Pantetheine 4'-phosphate is required as a cofactor.

Its function is as follows. Activates valine (or leucine, but much less frequently), and then glycine and catalyzes the formation of the peptide bond in the first step of peptide synthesis. This enzyme may also play a role in N-formylation of the first amino acid residue in the synthesized dipeptide. This chain is Linear gramicidin synthase subunit A (lgrA), found in Brevibacillus parabrevis.